We begin with the raw amino-acid sequence, 317 residues long: tRNA pseudouridine synthase B (317 aa).

The active-site Nucleophile is the D47.

Belongs to the pseudouridine synthase TruB family. Type 1 subfamily.

The catalysed reaction is uridine(55) in tRNA = pseudouridine(55) in tRNA. In terms of biological role, responsible for synthesis of pseudouridine from uracil-55 in the psi GC loop of transfer RNAs. The sequence is that of tRNA pseudouridine synthase B from Shewanella sp. (strain MR-4).